We begin with the raw amino-acid sequence, 1045 residues long: Mitotic deacetylase-associated SANT domain protein (1045 aa).

Met-1 carries the N-acetylmethionine modification. Disordered regions lie at residues 1–68 (MNLQ…PPPS) and 99–159 (NSVM…PTYY). Over residues 132–146 (STWNCHSLSLYSATK) the composition is skewed to polar residues. Lys-166 participates in a covalent cross-link: Glycyl lysine isopeptide (Lys-Gly) (interchain with G-Cter in SUMO2). Asymmetric dimethylarginine is present on Arg-193. Disordered regions lie at residues 228-264 (QVFR…QQAA), 276-305 (SMPQ…AHHS), 330-349 (APQP…SRRL), 378-397 (HHWP…HPEA), and 410-441 (LPDG…STGD). Residues 240 to 264 (VAAFPPQKQQQQQQPQQQQQQQQAA) show a composition bias toward low complexity. Over residues 412–425 (DGERLAPNGREREA) the composition is skewed to basic and acidic residues. Arg-447 bears the Omega-N-methylarginine mark. Ser-461 carries the phosphoserine modification. The interval 543–563 (QAGGLDEDGKGPEQNPAEHKP) is disordered. Residues 549–563 (EDGKGPEQNPAEHKP) are compositionally biased toward basic and acidic residues. Lys-590 participates in a covalent cross-link: Glycyl lysine isopeptide (Lys-Gly) (interchain with G-Cter in SUMO1); alternate. Lys-590 is covalently cross-linked (Glycyl lysine isopeptide (Lys-Gly) (interchain with G-Cter in SUMO2); alternate). Thr-655 carries the phosphothreonine modification. Phosphoserine is present on Ser-661. Thr-704 carries the post-translational modification Phosphothreonine. Position 709 is a phosphoserine (Ser-709). The residue at position 715 (Thr-715) is a Phosphothreonine. The region spanning 721 to 813 (PRINVGSRFQ…ETLNKLLLKK (93 aa)) is the ELM2 domain. Residues 828–879 (TGSDQWKMAERKLFNKGIAIYKKDFFLVQKLIQTKTVAQCVEFYYTYKKQVK) form the SANT domain. Residues 887-1045 (TFGDVDTSDE…NTFPCKKCGR (159 aa)) are disordered. 2 stretches are compositionally biased toward basic and acidic residues: residues 894-909 (SDEK…DIKT) and 919-942 (PRRE…RKEG). Ser-923 is subject to Phosphoserine. Residues 943 to 957 (EEEVPEIQEKEEQEE) are compositionally biased toward acidic residues. The span at 970 to 980 (ATQTLQANESA) shows a compositional bias: polar residues.

Interacts with DNTTIP1. Identified in a histone deacetylase complex that contains DNTTIP1, HDAC1 and MIDEAS; this complex assembles into a tetramer that contains four copies of each protein chain.

Its subcellular location is the nucleus. The polypeptide is Mitotic deacetylase-associated SANT domain protein (Homo sapiens (Human)).